We begin with the raw amino-acid sequence, 212 residues long: NAD(P)H dehydrogenase (quinone) 3 (212 aa).

Residues 4–192 enclose the Flavodoxin-like domain; that stretch reads MLVLYYSSYG…DGARFQGRHV (189 aa). FMN contacts are provided by residues 10–15 and 78–80; these read SSYGHI and TRF. Residue tyrosine 12 coordinates NAD(+). Substrate is bound at residue tryptophan 98. Residues 113–119 and histidine 134 contribute to the FMN site; that span reads STGSQHG. Residues 161 to 182 form a disordered region; the sequence is YGASTLAEDENHRDRSPSANEL.

The protein belongs to the WrbA family. It depends on FMN as a cofactor.

It carries out the reaction a quinone + NADH + H(+) = a quinol + NAD(+). The catalysed reaction is a quinone + NADPH + H(+) = a quinol + NADP(+). The chain is NAD(P)H dehydrogenase (quinone) 3 from Rhizobium meliloti (strain 1021) (Ensifer meliloti).